Here is a 261-residue protein sequence, read N- to C-terminus: Cytochrome c oxidase subunit 3 (261 aa).

Residues 1–15 (MAHQAHAYHMVDPSP) lie on the Mitochondrial matrix side of the membrane. Residues 16-34 (WPLTGAIAALLLTSGTAVW) form a helical membrane-spanning segment. Topologically, residues 35–40 (FHFHSL) are mitochondrial intermembrane. Residues 41–66 (TLLTLGNILLLLTMYQWWRDIIREGT) form a helical membrane-spanning segment. Over 67–72 (FQGHHT) the chain is Mitochondrial matrix. A helical membrane pass occupies residues 73 to 105 (PPVQKGLRYGMILFITSEVFFFLGFFWAFYHAS). Residues 106 to 128 (LAPTPELGGCWPPTGITTLDPFE) are Mitochondrial intermembrane-facing. A helical transmembrane segment spans residues 129–152 (VPLLNTAVLLASGVTVTWAHHSIM). At 153-155 (EGE) the chain is on the mitochondrial matrix side. A helical transmembrane segment spans residues 156-183 (RKQTIQALTLTILLGFYFTFLQGMEYYE). Residues 184–190 (APFTIAD) are Mitochondrial intermembrane-facing. A helical transmembrane segment spans residues 191-223 (GVYGSTFFVATGFHGLHVIIGSTFLAVCLLRQV). Residues 224–232 (QYHFTSEHH) lie on the Mitochondrial matrix side of the membrane. A helical membrane pass occupies residues 233-256 (FGFEAAAWYWHFVDVVWLFLYVSI). At 257–261 (YWWGS) the chain is on the mitochondrial intermembrane side.

This sequence belongs to the cytochrome c oxidase subunit 3 family. Component of the cytochrome c oxidase (complex IV, CIV), a multisubunit enzyme composed of 14 subunits. The complex is composed of a catalytic core of 3 subunits MT-CO1, MT-CO2 and MT-CO3, encoded in the mitochondrial DNA, and 11 supernumerary subunits COX4I, COX5A, COX5B, COX6A, COX6B, COX6C, COX7A, COX7B, COX7C, COX8 and NDUFA4, which are encoded in the nuclear genome. The complex exists as a monomer or a dimer and forms supercomplexes (SCs) in the inner mitochondrial membrane with NADH-ubiquinone oxidoreductase (complex I, CI) and ubiquinol-cytochrome c oxidoreductase (cytochrome b-c1 complex, complex III, CIII), resulting in different assemblies (supercomplex SCI(1)III(2)IV(1) and megacomplex MCI(2)III(2)IV(2)).

Its subcellular location is the mitochondrion inner membrane. It carries out the reaction 4 Fe(II)-[cytochrome c] + O2 + 8 H(+)(in) = 4 Fe(III)-[cytochrome c] + 2 H2O + 4 H(+)(out). In terms of biological role, component of the cytochrome c oxidase, the last enzyme in the mitochondrial electron transport chain which drives oxidative phosphorylation. The respiratory chain contains 3 multisubunit complexes succinate dehydrogenase (complex II, CII), ubiquinol-cytochrome c oxidoreductase (cytochrome b-c1 complex, complex III, CIII) and cytochrome c oxidase (complex IV, CIV), that cooperate to transfer electrons derived from NADH and succinate to molecular oxygen, creating an electrochemical gradient over the inner membrane that drives transmembrane transport and the ATP synthase. Cytochrome c oxidase is the component of the respiratory chain that catalyzes the reduction of oxygen to water. Electrons originating from reduced cytochrome c in the intermembrane space (IMS) are transferred via the dinuclear copper A center (CU(A)) of subunit 2 and heme A of subunit 1 to the active site in subunit 1, a binuclear center (BNC) formed by heme A3 and copper B (CU(B)). The BNC reduces molecular oxygen to 2 water molecules using 4 electrons from cytochrome c in the IMS and 4 protons from the mitochondrial matrix. The sequence is that of Cytochrome c oxidase subunit 3 (mt-co3) from Oncorhynchus clarkii (Cutthroat trout).